The chain runs to 269 residues: Formamidopyrimidine-DNA glycosylase (269 aa).

The active-site Schiff-base intermediate with DNA is the Pro2. Glu3 acts as the Proton donor in catalysis. Lys57 (proton donor; for beta-elimination activity) is an active-site residue. Residues His90, Arg109, and Lys150 each coordinate DNA. Residues 235–269 (RVYGRNGEPCRTCGTPIETAKHGQRSTFFCRRCQV) form an FPG-type zinc finger. Catalysis depends on Arg259, which acts as the Proton donor; for delta-elimination activity.

It belongs to the FPG family. As to quaternary structure, monomer. Zn(2+) serves as cofactor.

It carries out the reaction Hydrolysis of DNA containing ring-opened 7-methylguanine residues, releasing 2,6-diamino-4-hydroxy-5-(N-methyl)formamidopyrimidine.. It catalyses the reaction 2'-deoxyribonucleotide-(2'-deoxyribose 5'-phosphate)-2'-deoxyribonucleotide-DNA = a 3'-end 2'-deoxyribonucleotide-(2,3-dehydro-2,3-deoxyribose 5'-phosphate)-DNA + a 5'-end 5'-phospho-2'-deoxyribonucleoside-DNA + H(+). Functionally, involved in base excision repair of DNA damaged by oxidation or by mutagenic agents. Acts as a DNA glycosylase that recognizes and removes damaged bases. Has a preference for oxidized purines, such as 7,8-dihydro-8-oxoguanine (8-oxoG). Has AP (apurinic/apyrimidinic) lyase activity and introduces nicks in the DNA strand. Cleaves the DNA backbone by beta-delta elimination to generate a single-strand break at the site of the removed base with both 3'- and 5'-phosphates. In Pectobacterium atrosepticum (strain SCRI 1043 / ATCC BAA-672) (Erwinia carotovora subsp. atroseptica), this protein is Formamidopyrimidine-DNA glycosylase.